The sequence spans 273 residues: Light-independent protochlorophyllide reductase iron-sulfur ATP-binding protein (273 aa).

ATP-binding positions include 12–17 (GIGKST) and Lys41. A Mg(2+)-binding site is contributed by Ser16. 2 residues coordinate [4Fe-4S] cluster: Cys97 and Cys131. ATP is bound at residue 182-183 (NR).

The protein belongs to the NifH/BchL/ChlL family. In terms of assembly, homodimer. Protochlorophyllide reductase is composed of three subunits; BchL, BchN and BchB. Requires [4Fe-4S] cluster as cofactor.

The enzyme catalyses chlorophyllide a + oxidized 2[4Fe-4S]-[ferredoxin] + 2 ADP + 2 phosphate = protochlorophyllide a + reduced 2[4Fe-4S]-[ferredoxin] + 2 ATP + 2 H2O. The protein operates within porphyrin-containing compound metabolism; bacteriochlorophyll biosynthesis (light-independent). Its function is as follows. Component of the dark-operative protochlorophyllide reductase (DPOR) that uses Mg-ATP and reduced ferredoxin to reduce ring D of protochlorophyllide (Pchlide) to form chlorophyllide a (Chlide). This reaction is light-independent. The L component serves as a unique electron donor to the NB-component of the complex, and binds Mg-ATP. This chain is Light-independent protochlorophyllide reductase iron-sulfur ATP-binding protein, found in Roseiflexus sp. (strain RS-1).